Consider the following 132-residue polypeptide: Small ribosomal subunit protein uS8c (132 aa).

Belongs to the universal ribosomal protein uS8 family. Part of the 30S ribosomal subunit.

The protein resides in the plastid. Its subcellular location is the chloroplast. In terms of biological role, one of the primary rRNA binding proteins, it binds directly to 16S rRNA central domain where it helps coordinate assembly of the platform of the 30S subunit. The sequence is that of Small ribosomal subunit protein uS8c (rps8) from Gracilaria tenuistipitata var. liui (Red alga).